Reading from the N-terminus, the 276-residue chain is Biotin synthase (276 aa).

The Radical SAM core domain occupies 1 to 226 (MKKIYLCAIS…EAIIMLAGGR (226 aa)). Residues Cys17, Cys21, and Cys24 each contribute to the [4Fe-4S] cluster site. Positions 61, 95, and 153 each coordinate [2Fe-2S] cluster.

The protein belongs to the radical SAM superfamily. Biotin synthase family. In terms of assembly, homodimer. [4Fe-4S] cluster serves as cofactor. It depends on [2Fe-2S] cluster as a cofactor.

It carries out the reaction (4R,5S)-dethiobiotin + (sulfur carrier)-SH + 2 reduced [2Fe-2S]-[ferredoxin] + 2 S-adenosyl-L-methionine = (sulfur carrier)-H + biotin + 2 5'-deoxyadenosine + 2 L-methionine + 2 oxidized [2Fe-2S]-[ferredoxin]. Its pathway is cofactor biosynthesis; biotin biosynthesis; biotin from 7,8-diaminononanoate: step 2/2. Functionally, catalyzes the conversion of dethiobiotin (DTB) to biotin by the insertion of a sulfur atom into dethiobiotin via a radical-based mechanism. This Nautilia profundicola (strain ATCC BAA-1463 / DSM 18972 / AmH) protein is Biotin synthase.